The chain runs to 542 residues: Chaperonin GroEL 5 (542 aa).

Residues Thr30–Pro33, Lys51, Asp87–Thr91, Gly415, and Asp496 each bind ATP.

Belongs to the chaperonin (HSP60) family. In terms of assembly, forms a cylinder of 14 subunits composed of two heptameric rings stacked back-to-back. Interacts with the co-chaperonin GroES.

Its subcellular location is the cytoplasm. The enzyme catalyses ATP + H2O + a folded polypeptide = ADP + phosphate + an unfolded polypeptide.. Together with its co-chaperonin GroES, plays an essential role in assisting protein folding. The GroEL-GroES system forms a nano-cage that allows encapsulation of the non-native substrate proteins and provides a physical environment optimized to promote and accelerate protein folding. This chain is Chaperonin GroEL 5, found in Rhizobium meliloti (strain 1021) (Ensifer meliloti).